The following is a 242-amino-acid chain: Transcriptional activator protein BjaR1 (242 aa).

The HTH luxR-type domain occupies 173–238 (TPYPSTRLTP…HAVALAIRHK (66 aa)). The H-T-H motif DNA-binding region spans 197 to 216 (AWEIGEILHITQRTAEEHLA).

Belongs to the autoinducer-regulated transcriptional regulatory protein family.

Functionally, transcriptional activator that functions in response to the quorum-sensing autoinducer IV-HSL (isovaleryl-homoserine lactone). Activates BjaI expression. Is sensitive to IV-HSL at concentrations as low as 10 pM. This chain is Transcriptional activator protein BjaR1 (bjaR1), found in Bradyrhizobium diazoefficiens (strain JCM 10833 / BCRC 13528 / IAM 13628 / NBRC 14792 / USDA 110).